Consider the following 142-residue polypeptide: Large ribosomal subunit protein uL11 (142 aa).

It belongs to the universal ribosomal protein uL11 family. Part of the ribosomal stalk of the 50S ribosomal subunit. Interacts with L10 and the large rRNA to form the base of the stalk. L10 forms an elongated spine to which L12 dimers bind in a sequential fashion forming a multimeric L10(L12)X complex. One or more lysine residues are methylated.

In terms of biological role, forms part of the ribosomal stalk which helps the ribosome interact with GTP-bound translation factors. This Brucella abortus (strain S19) protein is Large ribosomal subunit protein uL11.